The chain runs to 370 residues: sn-glycerol-3-phosphate import ATP-binding protein UgpC (370 aa).

Residues 4 to 236 (LSLKNIAKRY…PATAFVAAFM (233 aa)) enclose the ABC transporter domain. 38-45 (GPSGCGKS) contacts ATP.

This sequence belongs to the ABC transporter superfamily. sn-glycerol-3-phosphate importer (TC 3.A.1.1.3) family. In terms of assembly, the complex is composed of two ATP-binding proteins (UgpC), two transmembrane proteins (UgpA and UgpE) and a solute-binding protein (UgpB).

Its subcellular location is the cell inner membrane. The enzyme catalyses sn-glycerol 3-phosphate(out) + ATP + H2O = sn-glycerol 3-phosphate(in) + ADP + phosphate + H(+). Its function is as follows. Part of the ABC transporter complex UgpBAEC involved in sn-glycerol-3-phosphate (G3P) import. Responsible for energy coupling to the transport system. This chain is sn-glycerol-3-phosphate import ATP-binding protein UgpC, found in Chromobacterium violaceum (strain ATCC 12472 / DSM 30191 / JCM 1249 / CCUG 213 / NBRC 12614 / NCIMB 9131 / NCTC 9757 / MK).